A 391-amino-acid polypeptide reads, in one-letter code: Carbamoyl phosphate synthase small chain (391 aa).

The interval 1 to 187 (MAGVKERAVL…PLPYAWPTLK (187 aa)) is CPSase. Ser50, Gly239, and Gly241 together coordinate L-glutamine. One can recognise a Glutamine amidotransferase type-1 domain in the interval 191 to 376 (RIVVMDFGIK…LEEVEAFHGA (186 aa)). Catalysis depends on Cys266, which acts as the Nucleophile. L-glutamine-binding residues include Leu267, Gln270, Asn308, Gly310, and Tyr311. Active-site residues include His349 and Glu351.

Belongs to the CarA family. Composed of two chains; the small (or glutamine) chain promotes the hydrolysis of glutamine to ammonia, which is used by the large (or ammonia) chain to synthesize carbamoyl phosphate. Tetramer of heterodimers (alpha,beta)4.

The enzyme catalyses hydrogencarbonate + L-glutamine + 2 ATP + H2O = carbamoyl phosphate + L-glutamate + 2 ADP + phosphate + 2 H(+). The catalysed reaction is L-glutamine + H2O = L-glutamate + NH4(+). It functions in the pathway amino-acid biosynthesis; L-arginine biosynthesis; carbamoyl phosphate from bicarbonate: step 1/1. It participates in pyrimidine metabolism; UMP biosynthesis via de novo pathway; (S)-dihydroorotate from bicarbonate: step 1/3. Small subunit of the glutamine-dependent carbamoyl phosphate synthetase (CPSase). CPSase catalyzes the formation of carbamoyl phosphate from the ammonia moiety of glutamine, carbonate, and phosphate donated by ATP, constituting the first step of 2 biosynthetic pathways, one leading to arginine and/or urea and the other to pyrimidine nucleotides. The small subunit (glutamine amidotransferase) binds and cleaves glutamine to supply the large subunit with the substrate ammonia. The chain is Carbamoyl phosphate synthase small chain from Thermus thermophilus (strain ATCC BAA-163 / DSM 7039 / HB27).